Reading from the N-terminus, the 160-residue chain is Putative control protein C.MjaVP (160 aa).

Its function is as follows. May be involved in control of expression of the type II restriction enzyme MjaV and/or its methyltransferase M.MjaV. The sequence is that of Putative control protein C.MjaVP from Methanocaldococcus jannaschii (strain ATCC 43067 / DSM 2661 / JAL-1 / JCM 10045 / NBRC 100440) (Methanococcus jannaschii).